Reading from the N-terminus, the 55-residue chain is DNA-directed RNA polymerase subunit Rpo10 (55 aa).

Zn(2+) contacts are provided by C6, C9, C43, and C44.

This sequence belongs to the archaeal Rpo10/eukaryotic RPB10 RNA polymerase subunit family. In terms of assembly, part of the RNA polymerase complex. Requires Zn(2+) as cofactor.

The protein localises to the cytoplasm. The catalysed reaction is RNA(n) + a ribonucleoside 5'-triphosphate = RNA(n+1) + diphosphate. Functionally, DNA-dependent RNA polymerase (RNAP) catalyzes the transcription of DNA into RNA using the four ribonucleoside triphosphates as substrates. The chain is DNA-directed RNA polymerase subunit Rpo10 from Methanothermobacter thermautotrophicus (strain ATCC 29096 / DSM 1053 / JCM 10044 / NBRC 100330 / Delta H) (Methanobacterium thermoautotrophicum).